Reading from the N-terminus, the 359-residue chain is Heme A synthase (359 aa).

Helical transmembrane passes span isoleucine 8–glycine 28, leucine 94–lysine 114, leucine 124–serine 144, glycine 159–isoleucine 179, and isoleucine 215–alanine 235. Position 274 (histidine 274) interacts with heme. 3 helical membrane passes run tryptophan 276–asparagine 296, methionine 303–valine 323, and isoleucine 328–isoleucine 348. Histidine 334 provides a ligand contact to heme.

It belongs to the COX15/CtaA family. Type 2 subfamily. As to quaternary structure, interacts with CtaB. It depends on heme b as a cofactor.

It is found in the cell membrane. It carries out the reaction Fe(II)-heme o + 2 A + H2O = Fe(II)-heme a + 2 AH2. Its pathway is porphyrin-containing compound metabolism; heme A biosynthesis; heme A from heme O: step 1/1. Its function is as follows. Catalyzes the conversion of heme O to heme A by two successive hydroxylations of the methyl group at C8. The first hydroxylation forms heme I, the second hydroxylation results in an unstable dihydroxymethyl group, which spontaneously dehydrates, resulting in the formyl group of heme A. This is Heme A synthase from Orientia tsutsugamushi (strain Ikeda) (Rickettsia tsutsugamushi).